The sequence spans 894 residues: UPF0182 protein GSU2333 (894 aa).

7 consecutive transmembrane segments (helical) span residues 6–26 (FLLI…LITF), 50–70 (VGAG…NLYF), 98–118 (MVQM…LLAG), 162–182 (KGFV…VYFF), 203–223 (LAIL…LDAV), 250–270 (ILTL…WKGA), and 275–295 (LIPP…YPAM).

It belongs to the UPF0182 family.

The protein resides in the cell membrane. The chain is UPF0182 protein GSU2333 from Geobacter sulfurreducens (strain ATCC 51573 / DSM 12127 / PCA).